We begin with the raw amino-acid sequence, 172 residues long: Shikimate kinase (172 aa).

ATP is bound at residue 11-16; the sequence is GAGKST. Position 15 (serine 15) interacts with Mg(2+). Substrate is bound by residues aspartate 33, arginine 57, and glycine 79. Arginine 117 provides a ligand contact to ATP. Arginine 136 is a binding site for substrate. Arginine 153 contributes to the ATP binding site.

This sequence belongs to the shikimate kinase family. In terms of assembly, monomer. Mg(2+) serves as cofactor.

It localises to the cytoplasm. It catalyses the reaction shikimate + ATP = 3-phosphoshikimate + ADP + H(+). The protein operates within metabolic intermediate biosynthesis; chorismate biosynthesis; chorismate from D-erythrose 4-phosphate and phosphoenolpyruvate: step 5/7. Functionally, catalyzes the specific phosphorylation of the 3-hydroxyl group of shikimic acid using ATP as a cosubstrate. This chain is Shikimate kinase, found in Pseudomonas entomophila (strain L48).